The sequence spans 268 residues: Ribosomal RNA small subunit methyltransferase A (268 aa).

The S-adenosyl-L-methionine site is built by N11, L13, G37, E58, D86, and N104.

Belongs to the class I-like SAM-binding methyltransferase superfamily. rRNA adenine N(6)-methyltransferase family. RsmA subfamily.

The protein localises to the cytoplasm. It catalyses the reaction adenosine(1518)/adenosine(1519) in 16S rRNA + 4 S-adenosyl-L-methionine = N(6)-dimethyladenosine(1518)/N(6)-dimethyladenosine(1519) in 16S rRNA + 4 S-adenosyl-L-homocysteine + 4 H(+). In terms of biological role, specifically dimethylates two adjacent adenosines (A1518 and A1519) in the loop of a conserved hairpin near the 3'-end of 16S rRNA in the 30S particle. May play a critical role in biogenesis of 30S subunits. The sequence is that of Ribosomal RNA small subunit methyltransferase A from Campylobacter fetus subsp. fetus (strain 82-40).